Here is a 501-residue protein sequence, read N- to C-terminus: Mitogen-activated protein kinase 16 (501 aa).

One can recognise a Protein kinase domain in the interval 22–313; that stretch reads YEVTEVVGKG…AAEALTDPYF (292 aa). Residues 28–36 and Lys51 each bind ATP; that span reads VGKGSYGVV. The Proton acceptor role is filled by Asp148. Thr184 carries the phosphothreonine modification. The TXY signature appears at 184 to 186; the sequence is TDY. Tyr186 bears the Phosphotyrosine mark. Residues 477–501 form a disordered region; the sequence is DEESMSEYMNEAADGVPHKIAQLKT.

It belongs to the protein kinase superfamily. CMGC Ser/Thr protein kinase family. MAP kinase subfamily. Post-translationally, dually phosphorylated on Thr-184 and Tyr-186, which activates the enzyme.

It carries out the reaction L-seryl-[protein] + ATP = O-phospho-L-seryl-[protein] + ADP + H(+). The catalysed reaction is L-threonyl-[protein] + ATP = O-phospho-L-threonyl-[protein] + ADP + H(+). With respect to regulation, activated by threonine and tyrosine phosphorylation. The sequence is that of Mitogen-activated protein kinase 16 (MPK16) from Oryza sativa subsp. japonica (Rice).